The chain runs to 246 residues: Deoxycytidylate 5-hydroxymethyltransferase (246 aa).

The active site involves Cys148.

The protein belongs to the thymidylate synthase family.

It carries out the reaction dCMP + (6R)-5,10-methylene-5,6,7,8-tetrahydrofolate + H2O = 5-hydroxymethyl-dCMP + (6S)-5,6,7,8-tetrahydrofolate. The sequence is that of Deoxycytidylate 5-hydroxymethyltransferase (42) from Enterobacteria phage T4 (Bacteriophage T4).